We begin with the raw amino-acid sequence, 919 residues long: Periodic tryptophan protein 2 homolog (919 aa).

WD repeat units lie at residues 12–50, 53–93, 94–132, 142–181, and 186–225; these read GTVY…SDTL, ATRY…LHHF, HFKG…REFN, GPYD…NLIY, and GHKD…EGLR. Residues 238 to 267 are disordered; the sequence is QREEEEEEEEDQEGDRETTIRGKATPAEEE. Acidic residues predominate over residues 240–251; it reads EEEEEEEEDQEG. The segment covering 252–267 has biased composition (basic and acidic residues); it reads DRETTIRGKATPAEEE. WD repeat units lie at residues 286–325, 328–368, 371–410, 413–452, 456–498, 499–538, 541–580, 603–642, and 700–740; these read GDFN…LIHS, ISDQ…YVLK, GHFN…CFVT, EHSS…NFRT, PRPT…DVLS, GHEG…RTKE, ALTS…QTGS, AKGK…LMKR, and KPEI…DPFE. Residues 882-919 are disordered; it reads TKRSLDPLGSEEEAEASEDDSLHLLGGGGRDSEEEMLA. The segment covering 890-900 has biased composition (acidic residues); it reads GSEEEAEASED. Ser898 and Ser902 each carry phosphoserine.

The protein belongs to the WD repeat PWP2 family. Part of the small subunit (SSU) processome, composed of more than 70 proteins and the RNA chaperone small nucleolar RNA (snoRNA) U3.

It localises to the nucleus. Its subcellular location is the nucleolus. Functionally, part of the small subunit (SSU) processome, first precursor of the small eukaryotic ribosomal subunit. During the assembly of the SSU processome in the nucleolus, many ribosome biogenesis factors, an RNA chaperone and ribosomal proteins associate with the nascent pre-rRNA and work in concert to generate RNA folding, modifications, rearrangements and cleavage as well as targeted degradation of pre-ribosomal RNA by the RNA exosome. This Homo sapiens (Human) protein is Periodic tryptophan protein 2 homolog.